A 596-amino-acid polypeptide reads, in one-letter code: Lamin-B2 (596 aa).

The tract at residues 1 to 20 (MASLPPHAGPATPLSPTRLS) is disordered. The head stretch occupies residues 1 to 26 (MASLPPHAGPATPLSPTRLSRLQEKE). Threonine 12 bears the Phosphothreonine mark. Position 15 is a phosphoserine (serine 15). The IF rod domain maps to 24–380 (EKEELRELND…KLLEGEEERL (357 aa)). A coil 1A region spans residues 27–61 (ELRELNDRLAHYIDRVRALELENDRLLLRISEKEE). Lysine 59 is subject to N6-acetyllysine; alternate. Residue lysine 59 forms a Glycyl lysine isopeptide (Lys-Gly) (interchain with G-Cter in SUMO2); alternate linkage. A linker 1 region spans residues 62-73 (VTTREVSGIKTL). The segment at 74–207 (YESELADARR…AFSKSVFEEE (134 aa)) is coil 1B. Residues lysine 173 and lysine 233 each participate in a glycyl lysine isopeptide (Lys-Gly) (interchain with G-Cter in SUMO2) cross-link. Residues 208-234 (VRETRRRHERRLVEVDSSRQQEYDFKM) form a linker 2 region. The coil 2 stretch occupies residues 235-378 (AQALEDLRSQ…YRKLLEGEEE (144 aa)). Phosphoserine occurs at positions 294 and 385. Residues 376–440 (EEERLKLSPS…ASRVSSGSRL (65 aa)) form a disordered region. The tract at residues 379 to 596 (RLKLSPSPSS…RTTSRGCRLM (218 aa)) is tail. The segment covering 382 to 403 (LSPSPSSRITISRATSSSSSSS) has biased composition (low complexity). Threonine 391 is a glycosylation site (O-linked (GlcNAc) threonine). Serine 398, serine 400, and serine 402 each carry phosphoserine. Position 413 is an omega-N-methylarginine (arginine 413). The Nuclear localization signal signature appears at 415–420 (KRRRLE). Residues 425–439 (SGSPSRASRVSSGSR) are compositionally biased toward low complexity. The region spanning 438–559 (SRLAQQTVAT…VKAAKHSSVQ (122 aa)) is the LTD domain. Lysine 465 is covalently cross-linked (Glycyl lysine isopeptide (Lys-Gly) (interchain with G-Cter in SUMO2)). At serine 473 the chain carries Phosphoserine. The interval 552–596 (AAKHSSVQGRENGEEEEEEEAEFGEEDLFHQQGDPRTTSRGCRLM) is disordered. The segment covering 564–577 (GEEEEEEEAEFGEE) has biased composition (acidic residues). The segment covering 585–596 (DPRTTSRGCRLM) has biased composition (polar residues). Cysteine 593 is subject to Cysteine methyl ester. A lipid anchor (S-farnesyl cysteine) is attached at cysteine 593. Residues 594–596 (RLM) constitute a propeptide, removed in mature form.

The protein belongs to the intermediate filament family. In terms of assembly, dimer. Lamin dimers then assemble into dimeric head-to-tail polymers. Ultimately, two head-to-tail polymers assemble laterally into a protofilament with a uniformly shaped rod of 3.5 nm in diameter. Interacts with TMEM43. B-type lamins undergo a series of modifications, such as farnesylation and phosphorylation. Increased phosphorylation of the lamins occurs before envelope disintegration and probably plays a role in regulating lamin associations. In terms of processing, phosphorylation plays a key role in lamin organization, subcellular localization and nuclear envelope disintegration. Phosphorylation by CDK1 at Ser-15 and Ser-385 at the onset of mitosis drives lamin disassembly and nuclear envelope breakdown. As to expression, germ cell-specific.

It localises to the nucleus lamina. In terms of biological role, lamins are intermediate filament proteins that assemble into a filamentous meshwork, and which constitute the major components of the nuclear lamina, a fibrous layer on the nucleoplasmic side of the inner nuclear membrane. Lamins provide a framework for the nuclear envelope, bridging the nuclear envelope and chromatin, thereby playing an important role in nuclear assembly, chromatin organization, nuclear membrane and telomere dynamics. The structural integrity of the lamina is strictly controlled by the cell cycle, as seen by the disintegration and formation of the nuclear envelope in prophase and telophase, respectively. The chain is Lamin-B2 (Lmnb2) from Mus musculus (Mouse).